The primary structure comprises 117 residues: Large ribosomal subunit protein uL22c (117 aa).

This sequence belongs to the universal ribosomal protein uL22 family. Part of the 50S ribosomal subunit.

The protein localises to the plastid. It is found in the chloroplast. Its function is as follows. This protein binds specifically to 23S rRNA. Functionally, the globular domain of the protein is located near the polypeptide exit tunnel on the outside of the subunit, while an extended beta-hairpin is found that lines the wall of the exit tunnel in the center of the 70S ribosome. The polypeptide is Large ribosomal subunit protein uL22c (rpl22) (Pyropia yezoensis (Susabi-nori)).